Reading from the N-terminus, the 436-residue chain is GTPase Der (436 aa).

2 EngA-type G domains span residues 4–167 and 176–351; these read PVIA…PKIE and IRFS…ESHS. GTP is bound by residues 10-17, 57-61, 119-122, 182-189, 229-233, and 294-297; these read GRPNVGKS, DTGGI, NKVD, DTAGM, and NKWD. Residues 352–436 form the KH-like domain; it reads IRIQTNVLND…PIHIIARARD (85 aa).

It belongs to the TRAFAC class TrmE-Era-EngA-EngB-Septin-like GTPase superfamily. EngA (Der) GTPase family. As to quaternary structure, associates with the 50S ribosomal subunit.

Its function is as follows. GTPase that plays an essential role in the late steps of ribosome biogenesis. This chain is GTPase Der, found in Bacillus anthracis (strain A0248).